The sequence spans 127 residues: Major sperm protein 77/79 (127 aa).

The residue at position 2 (Ala-2) is an N-acetylalanine. The MSP domain occupies 9–126; sequence DIQTQPGTKI…RRKNLPIEYN (118 aa).

As to expression, sperm.

The protein localises to the cell projection. It localises to the pseudopodium. It is found in the cytoplasm. The protein resides in the cytoskeleton. In terms of biological role, central component in molecular interactions underlying sperm crawling. Forms an extensive filament system that extends from sperm villipoda, along the leading edge of the pseudopod. This is Major sperm protein 77/79 (msp-77) from Caenorhabditis elegans.